Reading from the N-terminus, the 129-residue chain is Small ribosomal subunit protein uS11 (129 aa).

It belongs to the universal ribosomal protein uS11 family. In terms of assembly, part of the 30S ribosomal subunit. Interacts with proteins S7 and S18. Binds to IF-3.

Located on the platform of the 30S subunit, it bridges several disparate RNA helices of the 16S rRNA. Forms part of the Shine-Dalgarno cleft in the 70S ribosome. This chain is Small ribosomal subunit protein uS11, found in Azotobacter vinelandii (strain DJ / ATCC BAA-1303).